The following is a 185-amino-acid chain: UPF0397 protein lhv_0999 (185 aa).

Helical transmembrane passes span 11–31 (VVAM…TSIP), 45–65 (FLAL…GFIG), 72–92 (IMYG…GLII), 111–131 (ILLF…VVAP), and 145–165 (VFVQ…VVGT).

Belongs to the UPF0397 family.

The protein localises to the cell membrane. This Lactobacillus helveticus (strain DPC 4571) protein is UPF0397 protein lhv_0999.